We begin with the raw amino-acid sequence, 222 residues long: V-type ATP synthase subunit D (222 aa).

This sequence belongs to the V-ATPase D subunit family.

Produces ATP from ADP in the presence of a proton gradient across the membrane. The polypeptide is V-type ATP synthase subunit D (Clostridioides difficile (strain 630) (Peptoclostridium difficile)).